A 473-amino-acid chain; its full sequence is Adenosylhomocysteinase (473 aa).

Residues 58–62, Asp135, and Glu197 each bind substrate; that span reads HMTIQ. An NAD(+)-binding site is contributed by 198–200; the sequence is TTT. The substrate site is built by Lys227 and Asp231. Residues Asn232, Val265, Glu284, Asn319, 340–342, and Asn385 contribute to the NAD(+) site; that span reads IGH. His342 is a substrate binding site. His392 contributes to the substrate binding site. Lys467 and Tyr471 together coordinate NAD(+).

This sequence belongs to the adenosylhomocysteinase family. In terms of assembly, homotetramer; dimer of dimers. The cofactor is NAD(+).

The protein localises to the cytoplasm. The catalysed reaction is S-adenosyl-L-homocysteine + H2O = L-homocysteine + adenosine. It functions in the pathway amino-acid biosynthesis; L-homocysteine biosynthesis; L-homocysteine from S-adenosyl-L-homocysteine: step 1/1. Its function is as follows. May play a key role in the regulation of the intracellular concentration of adenosylhomocysteine, which is a strong inhibitor of SAM-dependent methyltransferases. Catalyzes the hydrolysis of S-adenosyl-L-homocysteine into L-homocysteine and adenosine. The chain is Adenosylhomocysteinase from Bradyrhizobium elkanii.